The following is a 242-amino-acid chain: Large ribosomal subunit protein uL30y (242 aa).

It belongs to the universal ribosomal protein uL30 family.

In Arabidopsis thaliana (Mouse-ear cress), this protein is Large ribosomal subunit protein uL30y (RPL7B).